Here is a 503-residue protein sequence, read N- to C-terminus: Catalase (503 aa).

Residues 1–26 (MAKDDKRLTGLFGHPVSDRENSMTAG) are disordered. Residues histidine 56 and asparagine 129 contribute to the active site. Tyrosine 339 contacts heme.

This sequence belongs to the catalase family. In terms of assembly, homodimer. Heme serves as cofactor.

The enzyme catalyses 2 H2O2 = O2 + 2 H2O. Decomposes hydrogen peroxide into water and oxygen; serves to protect cells from the toxic effects of hydrogen peroxide. This Staphylococcus haemolyticus (strain JCSC1435) protein is Catalase (katA).